Consider the following 470-residue polypeptide: Ribulose bisphosphate carboxylase large chain (470 aa).

Residues Asn115 and Thr165 each contribute to the substrate site. The active-site Proton acceptor is Lys167. Lys169 contributes to the substrate binding site. Mg(2+)-binding residues include Lys193, Asp195, and Glu196. Lys193 carries the post-translational modification N6-carboxylysine. The active-site Proton acceptor is the His286. Residues Arg287, His319, and Ser371 each coordinate substrate.

The protein belongs to the RuBisCO large chain family. Type I subfamily. In terms of assembly, heterohexadecamer of 8 large chains and 8 small chains. Requires Mg(2+) as cofactor.

Its subcellular location is the carboxysome. The catalysed reaction is 2 (2R)-3-phosphoglycerate + 2 H(+) = D-ribulose 1,5-bisphosphate + CO2 + H2O. The enzyme catalyses D-ribulose 1,5-bisphosphate + O2 = 2-phosphoglycolate + (2R)-3-phosphoglycerate + 2 H(+). RuBisCO catalyzes two reactions: the carboxylation of D-ribulose 1,5-bisphosphate, the primary event in carbon dioxide fixation, as well as the oxidative fragmentation of the pentose substrate in the photorespiration process. Both reactions occur simultaneously and in competition at the same active site. The chain is Ribulose bisphosphate carboxylase large chain from Synechococcus sp. (strain CC9311).